A 380-amino-acid polypeptide reads, in one-letter code: Pectin lyase (380 aa).

Residues 1 to 20 (MRSASILSAALAAFAPLASA) form the signal peptide. A glycan (N-linked (GlcNAc...) asparagine) is linked at N130.

This sequence belongs to the polysaccharide lyase 1 family.

Its subcellular location is the secreted. The catalysed reaction is Eliminative cleavage of (1-&gt;4)-alpha-D-galacturonan methyl ester to give oligosaccharides with 4-deoxy-6-O-methyl-alpha-D-galact-4-enuronosyl groups at their non-reducing ends.. The chain is Pectin lyase (PNLA) from Colletotrichum gloeosporioides (Anthracnose fungus).